Reading from the N-terminus, the 798-residue chain is MEASGKLICRQRQVLFSFLLLGLSLAGAAEPRSYSVVEETEGSSFVTNLAKDLGLEQREFSRRGVRVVSRGNKLHLQLNQETGDLLLNEKLDREDLCGHTEPCVLRFQVLLESPFEFFQAELQVIDINDHSPVFLDKQMLVKVSESSPPGTAFPLKNAEDLDVGQNNIENYIISPNSHFRVLTRKRSDGRKYPELVLDKALDREEEAELRLTLTALDGGSPPRSGTAQVYIEVLDVNDNAPEFEQPFYRVQISEDSPVGFLVVKVSATDVDTGVNGEISYSLFQASEEIGKTFKINPLTGEIELKKQLDFEKLQSYEVNIEARDAGTFSGKCTVLIQVIDVNDHAPEVTMSAFTSPIPENAPETVVALFSVSDLDSGENGKISCSIQEDLPFLLKSAENFYTLLTERPLDRESRAEYNITITVTDLGTPMLKTQLNMTVLIADVNDNAPAFTQTSYTLFVRENNSPALHIGSVSATDRDSGTNAQVTYSLLPPQDPHLPLTSLVSINADNGHLFALRSLDYEALQGFEFRVGASDHGSPALSSEALVRVLVLDANDNSPFVLYPLQNGSAPCTELVPRAAEPGYLVTKVVAVDGDSGQNAWLSYQLLKATEPGLFGVWAHNGEVRTARLLSERDAAKHRLAVLVKDNGEPPRSATATLHVLLVDGFSQPYLPLPEAAPTQAQADSLTVYLVVALASVSSLFLFSVLLFVAVRLCRRSRAASVGRCLVPEGPLPGHLVDMGGTGTLSQSYQYEVCLAGGSGTNEFKFLKPIIPNFPPQCPGKEIQGNSTFPNNFGFNIQ.

A signal peptide spans 1–28 (MEASGKLICRQRQVLFSFLLLGLSLAGA). Topologically, residues 29–690 (AEPRSYSVVE…AQADSLTVYL (662 aa)) are extracellular. 5 Cadherin domains span residues 36 to 134 (VVEE…SPVF), 139 to 243 (MLVK…APEF), 248 to 348 (YRVQ…APEV), 353 to 451 (FTSP…APAF), and 456 to 561 (YTLF…SPFV). Residues N418 and N436 are each glycosylated (N-linked (GlcNAc...) asparagine). N-linked (GlcNAc...) asparagine glycosylation is present at N567. A Cadherin 6 domain is found at 568–671 (GSAPCTELVP…LVDGFSQPYL (104 aa)). Residues 691–711 (VVALASVSSLFLFSVLLFVAV) traverse the membrane as a helical segment. The Cytoplasmic segment spans residues 712–798 (RLCRRSRAAS…FPNNFGFNIQ (87 aa)).

The protein localises to the cell membrane. Functionally, potential calcium-dependent cell-adhesion protein. May be involved in the establishment and maintenance of specific neuronal connections in the brain. The protein is Protocadherin beta-13 (PCDHB13) of Pan troglodytes (Chimpanzee).